Consider the following 100-residue polypeptide: Cell division protein FtsB (100 aa).

Residues 1–3 (MKW) lie on the Cytoplasmic side of the membrane. Residues 4 to 21 (LAIILVVALLALQYRLWM) traverse the membrane as a helical segment. Residues 22 to 100 (GEGSIASVVS…TDKDTKKNKK (79 aa)) lie on the Periplasmic side of the membrane. Residues 26 to 73 (IASVVSLNREIAKQKEENARLRERNRLLAAEVDALKQGKDAIEERARN) are a coiled coil.

The protein belongs to the FtsB family. As to quaternary structure, part of a complex composed of FtsB, FtsL and FtsQ.

It is found in the cell inner membrane. Essential cell division protein. May link together the upstream cell division proteins, which are predominantly cytoplasmic, with the downstream cell division proteins, which are predominantly periplasmic. The chain is Cell division protein FtsB from Saccharophagus degradans (strain 2-40 / ATCC 43961 / DSM 17024).